The following is a 1486-amino-acid chain: Protein PRRC2B (1486 aa).

Disordered stretches follow at residues 1–20 (MSDR…KYST), 39–306 (VIPR…FPLP), 320–341 (QMND…PLRQ), 385–519 (KFSD…AREE), and 531–658 (LDQK…EQLY). Residues 88–137 (ANKQDQQDPKSSSVTASQPPESQPQPGLQKSVSNLQKPTQSISQENTNSV) are compositionally biased toward polar residues. Residues Ser-166, Ser-168, Ser-222, and Ser-226 each carry the phosphoserine modification. The span at 219–235 (SAASLSASPTELGSRNA) shows a compositional bias: polar residues. Thr-228 carries the phosphothreonine modification. A Glycyl lysine isopeptide (Lys-Gly) (interchain with G-Cter in SUMO2) cross-link involves residue Lys-251. Residues 288–300 (SPQSSENQTTVER) show a composition bias toward polar residues. Residues Ser-387 and Ser-415 each carry the phosphoserine modification. Basic and acidic residues-rich tracts occupy residues 422–433 (TDAKRTQEEGKD), 478–488 (HSAEDKEDKPP), and 501–519 (AVER…AREE). Ser-479 carries the post-translational modification Phosphoserine. Residues 494 to 544 (IQSEMSEAVERARKRREEEERRAREERLAACAAKLKQLDQKCRQAQKANET) adopt a coiled-coil conformation. Ser-555 is modified (phosphoserine). Low complexity predominate over residues 600-611 (SNSSSSSSSSSS). Ser-621 carries the post-translational modification Phosphoserine. The segment covering 638–656 (QRQQQQQQQQQQQQQQQEQ) has biased composition (low complexity). Lys-751 is covalently cross-linked (Glycyl lysine isopeptide (Lys-Gly) (interchain with G-Cter in SUMO2)). Position 753 is a phosphothreonine (Thr-753). Ser-762 and Ser-793 each carry phosphoserine. Disordered stretches follow at residues 792–847 (RSPD…EARK), 893–918 (EERR…IPPR), and 950–1080 (ALPV…PGAV). Residues 880 to 904 (IEVLTKKQRRLLEEERRKKEQAAQV) adopt a coiled-coil conformation. Residues 960-986 (SWRTAVTAFSSTEPGTSEQGFKSSQGD) show a composition bias toward polar residues. Residues 998 to 1007 (SSATSSQRSS) show a composition bias toward low complexity. 2 stretches are compositionally biased toward basic and acidic residues: residues 1025–1055 (SKAD…EHRP) and 1062–1074 (RSLK…EGAE). Ser-1070 and Ser-1159 each carry phosphoserine. Disordered stretches follow at residues 1177–1205 (KAWE…SSVG), 1410–1443 (QSIQ…TSRE), and 1455–1486 (ADSK…AWEP). The span at 1181–1191 (NSPSLPEQSSP) shows a compositional bias: polar residues. Positions 1410–1421 (QSIQLPPGQSLS) are enriched in low complexity. Polar residues predominate over residues 1457–1474 (SKQNVPTGGSAPSPQAYR).

This chain is Protein PRRC2B (Prrc2b), found in Mus musculus (Mouse).